Consider the following 228-residue polypeptide: Phosphoglycolate phosphatase (228 aa).

Asp-9 functions as the Nucleophile in the catalytic mechanism. Mg(2+) contacts are provided by Asp-9 and Asp-11. Lys-151 is a substrate binding site. Mg(2+) is bound by residues Asp-174 and Asp-178.

Belongs to the archaeal SPP-like hydrolase family. Requires Mg(2+) as cofactor.

It carries out the reaction 2-phosphoglycolate + H2O = glycolate + phosphate. Functionally, catalyzes the dephosphorylation of 2-phosphoglycolate. This is Phosphoglycolate phosphatase from Pyrobaculum aerophilum (strain ATCC 51768 / DSM 7523 / JCM 9630 / CIP 104966 / NBRC 100827 / IM2).